A 615-amino-acid polypeptide reads, in one-letter code: Gluconate 2-dehydrogenase flavoprotein (615 aa).

An N-terminal signal peptide occupies residues Met1 to Val22. His542 functions as the Proton acceptor in the catalytic mechanism.

This sequence belongs to the GMC oxidoreductase family. In terms of assembly, heterotrimer. FAD serves as cofactor.

The protein localises to the cell membrane. The catalysed reaction is D-gluconate + A = 2-dehydro-D-gluconate + AH2. Its function is as follows. Part of the heterotrimer that catalyzes the conversion of D-gluconate to 2-dehydro-D-gluconate. This subunit functions as the dehydrogenase. The chain is Gluconate 2-dehydrogenase flavoprotein from Pantoea cypripedii (Pectobacterium cypripedii).